A 208-amino-acid polypeptide reads, in one-letter code: Pyridoxine/pyridoxamine 5'-phosphate oxidase (208 aa).

Residues 55-60, 70-71, lysine 77, and glutamine 99 each bind FMN; these read RMVLLK and YT. Residue lysine 60 participates in substrate binding. Substrate is bound by residues tyrosine 117, arginine 121, and serine 125. FMN-binding positions include 134–135 and tryptophan 180; that span reads QS. 186–188 contacts substrate; that stretch reads RIH. Arginine 190 contacts FMN.

It belongs to the pyridoxamine 5'-phosphate oxidase family. As to quaternary structure, homodimer. FMN is required as a cofactor.

It catalyses the reaction pyridoxamine 5'-phosphate + O2 + H2O = pyridoxal 5'-phosphate + H2O2 + NH4(+). The catalysed reaction is pyridoxine 5'-phosphate + O2 = pyridoxal 5'-phosphate + H2O2. It functions in the pathway cofactor metabolism; pyridoxal 5'-phosphate salvage; pyridoxal 5'-phosphate from pyridoxamine 5'-phosphate: step 1/1. The protein operates within cofactor metabolism; pyridoxal 5'-phosphate salvage; pyridoxal 5'-phosphate from pyridoxine 5'-phosphate: step 1/1. Its function is as follows. Catalyzes the oxidation of either pyridoxine 5'-phosphate (PNP) or pyridoxamine 5'-phosphate (PMP) into pyridoxal 5'-phosphate (PLP). This Pelagibacter ubique (strain HTCC1062) protein is Pyridoxine/pyridoxamine 5'-phosphate oxidase.